The following is a 447-amino-acid chain: uncharacterized protein (447 aa).

The tract at residues 392 to 435 (RFTKPSSSVAKSTSPSLRNSGSDESDLNQSDSDKEDERVVPVPK) is disordered. Low complexity predominate over residues 395–407 (KPSSSVAKSTSPS). Residues 408-421 (LRNSGSDESDLNQS) are compositionally biased toward polar residues.

This is an uncharacterized protein from Invertebrate iridescent virus 3 (IIV-3).